The sequence spans 149 residues: Dehydrin Rab15 (149 aa).

Residues 1–149 (MEFQGQHDNP…KIKEKLPGQH (149 aa)) form a disordered region. Residues 78-93 (KEKIKEKLPGGHKDNQ) are compositionally biased toward basic and acidic residues. A compositionally biased stretch (gly residues) spans 100-117 (TGTGGAYGPGTGTGGAYG). Basic and acidic residues predominate over residues 132–149 (GEKKGIMDKIKEKLPGQH).

This sequence belongs to the plant dehydrin family.

The polypeptide is Dehydrin Rab15 (RAB15) (Triticum aestivum (Wheat)).